Here is a 316-residue protein sequence, read N- to C-terminus: Heme oxygenase 2 (316 aa).

The span at 1–12 (MSAEVETSEGVD) shows a compositional bias: acidic residues. The tract at residues 1–29 (MSAEVETSEGVDESEKKNSGALEKENQMR) is disordered. An N-acetylserine modification is found at Ser-2. Residue Ser-2 is modified to Phosphoserine. A compositionally biased stretch (basic and acidic residues) spans 13–27 (ESEKKNSGALEKENQ). His-45 provides a ligand contact to heme b. HRM repeat units follow at residues 264–269 (KCPFYA) and 281–286 (SCPFRT). S-nitrosocysteine is present on residues Cys-265 and Cys-282.

It belongs to the heme oxygenase family. Post-translationally, S-nitrosylated by BLVRB.

It localises to the microsome. It is found in the endoplasmic reticulum. It catalyses the reaction heme b + 3 reduced [NADPH--hemoprotein reductase] + 3 O2 = biliverdin IXalpha + CO + Fe(2+) + 3 oxidized [NADPH--hemoprotein reductase] + 3 H2O + H(+). Functionally, heme oxygenase cleaves the heme ring at the alpha methene bridge to form biliverdin. Biliverdin is subsequently converted to bilirubin by biliverdin reductase. Under physiological conditions, the activity of heme oxygenase is highest in the spleen, where senescent erythrocytes are sequestrated and destroyed. Heme oxygenase 2 could be implicated in the production of carbon monoxide in brain where it could act as a neurotransmitter. The sequence is that of Heme oxygenase 2 (HMOX2) from Macaca fascicularis (Crab-eating macaque).